A 343-amino-acid chain; its full sequence is Phosphoglycerate mutase-like protein 2 (343 aa).

Residues 1 to 35 (MIHQSMTSNLSFYISSVSHLSSPLPSLSRLSLRCC) constitute a chloroplast transit peptide. His-65 serves as the catalytic Tele-phosphohistidine intermediate. The active-site Proton donor/acceptor is the Glu-177. The disordered stretch occupies residues 322–343 (MTNYPGTILTGEDASSDIADQK).

The protein belongs to the phosphoglycerate mutase family.

Its subcellular location is the plastid. The protein resides in the chloroplast. Functionally, may play a role in carbohydrates metabolism. The protein is Phosphoglycerate mutase-like protein 2 of Arabidopsis thaliana (Mouse-ear cress).